The sequence spans 70 residues: Small ribosomal subunit protein bS18 (70 aa).

This sequence belongs to the bacterial ribosomal protein bS18 family. In terms of assembly, part of the 30S ribosomal subunit. Forms a tight heterodimer with protein bS6.

Binds as a heterodimer with protein bS6 to the central domain of the 16S rRNA, where it helps stabilize the platform of the 30S subunit. The chain is Small ribosomal subunit protein bS18 from Salinibacter ruber (strain DSM 13855 / M31).